The following is a 133-amino-acid chain: Small ribosomal subunit protein eS24 (133 aa).

N-acetylmethionine is present on M1. Position 9 is a phosphothreonine (T9). A Glycyl lysine isopeptide (Lys-Gly) (interchain with G-Cter in SUMO2) cross-link involves residue K37. Residues 92–133 are disordered; the sequence is ARHGLYEKKKTSRKQRKERKNRMKKVRGTAKANVGAGKKPKE. The span at 101–119 shows a compositional bias: basic residues; sequence KTSRKQRKERKNRMKKVRG.

Belongs to the eukaryotic ribosomal protein eS24 family. As to quaternary structure, component of the small ribosomal subunit. Part of the small subunit (SSU) processome, composed of more than 70 proteins and the RNA chaperone small nucleolar RNA (snoRNA) U3.

Its subcellular location is the cytoplasm. It localises to the nucleus. It is found in the nucleolus. In terms of biological role, component of the small ribosomal subunit. The ribosome is a large ribonucleoprotein complex responsible for the synthesis of proteins in the cell. Required for processing of pre-rRNA and maturation of 40S ribosomal subunits. Part of the small subunit (SSU) processome, first precursor of the small eukaryotic ribosomal subunit. During the assembly of the SSU processome in the nucleolus, many ribosome biogenesis factors, an RNA chaperone and ribosomal proteins associate with the nascent pre-rRNA and work in concert to generate RNA folding, modifications, rearrangements and cleavage as well as targeted degradation of pre-ribosomal RNA by the RNA exosome. This chain is Small ribosomal subunit protein eS24 (RPS24), found in Oryctolagus cuniculus (Rabbit).